We begin with the raw amino-acid sequence, 503 residues long: Hexose transporter 1 (503 aa).

Topologically, residues 1 to 26 are cytoplasmic; sequence MKKSSKEISPSQSLKNGGSDHFFNTS. A helical transmembrane segment spans residues 27 to 47; the sequence is LMYVLAACLASFIFGYQVSVL. Residues 48 to 76 lie on the Extracellular side of the membrane; the sequence is NTIKNFIVIEFGWCTGNKVECDDSTLKSS. A disulfide bridge connects residues cysteine 61 and cysteine 68. Residues 77 to 97 traverse the membrane as a helical segment; that stretch reads FLLASVFIGAVVGSGFSDYLV. The Cytoplasmic segment spans residues 98-102; the sequence is QHGRR. A helical transmembrane segment spans residues 103–123; that stretch reads FSLLVIYNFFILVSILTSITH. Topologically, residues 124–132 are extracellular; that stretch reads HFHTILFSR. Residues 133–153 traverse the membrane as a helical segment; that stretch reads LLSGFGVGLITVSVPMYISEM. Over 154–163 the chain is Cytoplasmic; that stretch reads THKDKKGAYG. The helical transmembrane segment at 164-184 threads the bilayer; it reads VLHQLFITFGILVAVLLGMAM. Glutamine 167 serves as a coordination point for alpha-D-glucose. Glutamine 167 lines the beta-D-glucose pocket. Over 185–205 the chain is Extracellular; sequence GEAPDAKSVDALGEFQKIWWR. A helical membrane pass occupies residues 206–226; the sequence is LMFFFPCLISILGIVLLTFFY. At 227–291 the chain is on the cytoplasmic side; that stretch reads KEETPYYLFE…RAMQIPSYRN (65 aa). Residues 292–312 traverse the membrane as a helical segment; the sequence is VILLGCILSGLQQFTGINVLV. Alpha-D-glucose-binding residues include glutamine 303, glutamine 304, and asparagine 309. Glutamine 303 contributes to the beta-D-glucose binding site. Residue asparagine 309 coordinates beta-D-glucose. The Extracellular portion of the chain corresponds to 313 to 329; sequence SNSNELYKEFLSNKLIT. The chain crosses the membrane as a helical span at residues 330–350; sequence TLSVIMTVVNFLMTFPAIYIV. Asparagine 339 is a binding site for beta-D-glucose. Residues 351 to 356 are Cytoplasmic-facing; sequence EKLGRK. A helical transmembrane segment spans residues 357 to 377; it reads TLLLCGCAGVTLAAFLPTAIA. The Extracellular portion of the chain corresponds to 378 to 391; sequence NQIDRSSDLVRNLS. The helical transmembrane segment at 392–412 threads the bilayer; it reads IAATFVMIISFAVSYGPVLWI. Residue tryptophan 411 coordinates alpha-D-glucose. Over 413–428 the chain is Cytoplasmic; it reads YLHEMFPSEIKDSAAS. A helical transmembrane segment spans residues 429–449; the sequence is LASLVNWVCAIIVVFPSDIII. Over 450-454 the chain is Extracellular; the sequence is KKSPT. Residues 455–475 form a helical membrane-spanning segment; the sequence is ILFFIFSGMSILSFLFIFFFI. At 476–503 the chain is on the cytoplasmic side; the sequence is KETKGGEIGTSPYITMEERQKHMGKSAV.

The protein belongs to the major facilitator superfamily. Sugar transporter (TC 2.A.1.1) family. As to quaternary structure, homodimer.

It is found in the cell membrane. The catalysed reaction is D-glucose(out) = D-glucose(in). It catalyses the reaction D-fructose(out) = D-fructose(in). The enzyme catalyses D-galactose(in) = D-galactose(out). It carries out the reaction D-mannose(out) = D-mannose(in). The catalysed reaction is D-glucosamine(out) = D-glucosamine(in). It catalyses the reaction D-xylose(out) = D-xylose(in). Its activity is regulated as follows. Inhibited by compound 3361 (3-O-((undec-10-en)-1-yl)-D-glucose). In terms of biological role, sodium-independent facilitative hexose transporter. Can transport D-glucose and D-fructose. Can transport D-mannose, D-galactose, D-xylose and D-glucosamine. The polypeptide is Hexose transporter 1 (Plasmodium vivax).